Consider the following 638-residue polypeptide: Mediator of RNA polymerase II transcription subunit 17 (638 aa).

Positions 1 to 21 are disordered; it reads MSDSFNLPLRPLTEKRERPDP.

This sequence belongs to the Mediator complex subunit 17 family. In terms of assembly, component of the Mediator complex.

The protein resides in the nucleus. In terms of biological role, component of the Mediator complex, a coactivator involved in the regulated transcription of nearly all RNA polymerase II-dependent genes. Mediator functions as a bridge to convey information from gene-specific regulatory proteins to the basal RNA polymerase II transcription machinery. Mediator is recruited to promoters by direct interactions with regulatory proteins and serves as a scaffold for the assembly of a functional preinitiation complex with RNA polymerase II and the general transcription factors. This chain is Mediator of RNA polymerase II transcription subunit 17 (srb4), found in Aspergillus oryzae (strain ATCC 42149 / RIB 40) (Yellow koji mold).